Here is a 515-residue protein sequence, read N- to C-terminus: Probable coatomer subunit delta (515 aa).

The segment covering 161 to 180 has biased composition (basic and acidic residues); that stretch reads AKQAMAEKAKELKRAQKEAL. The segment at 161–231 is disordered; it reads AKQAMAEKAK…GGKALKLGGK (71 aa). Over residues 187–198 the composition is skewed to low complexity; that stretch reads SYQSSTGISSSS. Positions 276–515 constitute an MHD domain; that stretch reads REVVHVRTEE…TFNSENFEIV (240 aa).

This sequence belongs to the adaptor complexes medium subunit family. Delta-COP subfamily. As to quaternary structure, oligomeric complex that consists of at least the alpha, beta, beta', gamma, delta, epsilon and zeta subunits.

The protein resides in the cytoplasm. It localises to the golgi apparatus membrane. It is found in the cytoplasmic vesicle. The protein localises to the COPI-coated vesicle membrane. Its function is as follows. The coatomer is a cytosolic protein complex that binds to dilysine motifs and reversibly associates with Golgi non-clathrin-coated vesicles, which further mediate biosynthetic protein transport from the ER, via the Golgi up to the trans Golgi network. Coatomer complex is required for budding from Golgi membranes, and is essential for the retrograde Golgi-to-ER transport of dilysine-tagged proteins. The polypeptide is Probable coatomer subunit delta (Caenorhabditis elegans).